Consider the following 603-residue polypeptide: Elongation factor 4 (603 aa).

The tr-type G domain maps to 7–189 (SRIRNFSIIA…SIVQLVPPPQ (183 aa)). Residues 19–24 (DHGKST) and 136–139 (NKID) contribute to the GTP site.

The protein belongs to the TRAFAC class translation factor GTPase superfamily. Classic translation factor GTPase family. LepA subfamily.

It is found in the cell inner membrane. The catalysed reaction is GTP + H2O = GDP + phosphate + H(+). Functionally, required for accurate and efficient protein synthesis under certain stress conditions. May act as a fidelity factor of the translation reaction, by catalyzing a one-codon backward translocation of tRNAs on improperly translocated ribosomes. Back-translocation proceeds from a post-translocation (POST) complex to a pre-translocation (PRE) complex, thus giving elongation factor G a second chance to translocate the tRNAs correctly. Binds to ribosomes in a GTP-dependent manner. The protein is Elongation factor 4 of Microcystis aeruginosa (strain NIES-843 / IAM M-2473).